The following is a 239-amino-acid chain: Octanoyltransferase (239 aa).

In terms of domain architecture, BPL/LPL catalytic spans 48–236 (EGGDELVWLV…AFETVFGETT (189 aa)). Substrate-binding positions include 87–94 (RGGEYTYH), 167–169 (ALG), and 180–182 (GLS). Residue cysteine 198 is the Acyl-thioester intermediate of the active site.

Belongs to the LipB family.

The protein localises to the cytoplasm. It carries out the reaction octanoyl-[ACP] + L-lysyl-[protein] = N(6)-octanoyl-L-lysyl-[protein] + holo-[ACP] + H(+). Its pathway is protein modification; protein lipoylation via endogenous pathway; protein N(6)-(lipoyl)lysine from octanoyl-[acyl-carrier-protein]: step 1/2. Functionally, catalyzes the transfer of endogenously produced octanoic acid from octanoyl-acyl-carrier-protein onto the lipoyl domains of lipoate-dependent enzymes. Lipoyl-ACP can also act as a substrate although octanoyl-ACP is likely to be the physiological substrate. The sequence is that of Octanoyltransferase from Rhizobium etli (strain ATCC 51251 / DSM 11541 / JCM 21823 / NBRC 15573 / CFN 42).